The primary structure comprises 313 residues: ADP-L-glycero-D-manno-heptose-6-epimerase (313 aa).

Residues 10 to 11, 31 to 32, Arg38, Lys53, 75 to 79, and Asn92 each bind NADP(+); these read FI, DD, and EGACS. Tyr139 functions as the Proton acceptor in the catalytic mechanism. NADP(+) is bound at residue Lys143. Asn168 contributes to the substrate binding site. Residues Val169 and Lys177 each contribute to the NADP(+) site. Residue Lys177 is the Proton acceptor of the active site. Substrate is bound by residues Lys179, His186, 200–203, Arg213, and Tyr277; that span reads FEGW.

The protein belongs to the NAD(P)-dependent epimerase/dehydratase family. HldD subfamily. In terms of assembly, homopentamer. Requires NADP(+) as cofactor.

It carries out the reaction ADP-D-glycero-beta-D-manno-heptose = ADP-L-glycero-beta-D-manno-heptose. It functions in the pathway nucleotide-sugar biosynthesis; ADP-L-glycero-beta-D-manno-heptose biosynthesis; ADP-L-glycero-beta-D-manno-heptose from D-glycero-beta-D-manno-heptose 7-phosphate: step 4/4. Functionally, catalyzes the interconversion between ADP-D-glycero-beta-D-manno-heptose and ADP-L-glycero-beta-D-manno-heptose via an epimerization at carbon 6 of the heptose. This is ADP-L-glycero-D-manno-heptose-6-epimerase from Marinobacter nauticus (strain ATCC 700491 / DSM 11845 / VT8) (Marinobacter aquaeolei).